The following is a 20-amino-acid chain: Cupiennin-6f (20 aa).

Expressed by the venom gland.

It localises to the secreted. The polypeptide is Cupiennin-6f (Cupiennius salei (American wandering spider)).